Consider the following 617-residue polypeptide: UvrABC system protein C (617 aa).

Positions 22 to 100 (KLPGVYRFFD…IKALSPKYNI (79 aa)) constitute a GIY-YIG domain. The 36-residue stretch at 209–244 (DELTRTLQHKMQTAAANLQFEEAARYRDQIQALGII) folds into the UVR domain.

Belongs to the UvrC family. As to quaternary structure, interacts with UvrB in an incision complex.

The protein localises to the cytoplasm. Functionally, the UvrABC repair system catalyzes the recognition and processing of DNA lesions. UvrC both incises the 5' and 3' sides of the lesion. The N-terminal half is responsible for the 3' incision and the C-terminal half is responsible for the 5' incision. The polypeptide is UvrABC system protein C (Neisseria gonorrhoeae (strain ATCC 700825 / FA 1090)).